The chain runs to 172 residues: UPF0254 protein Mlab_1743 (172 aa).

The protein belongs to the UPF0254 family.

This Methanocorpusculum labreanum (strain ATCC 43576 / DSM 4855 / Z) protein is UPF0254 protein Mlab_1743.